A 229-amino-acid chain; its full sequence is MSDSQEIPYHNQLKNRFRGYFPVIIDVETAGFDAKKDALLELAAITLKMDENGYLHPDQKCHFHIKPFEGANINPESLKFNGIDIHNPLRGAVSELDAITGLFQMVRRGQKDADCQRSIIVAHNAAFDQSFVMAAAERTGVKRNPFHPFGMFDTASLAGLMFGQTVLVKACQAAKIPFDGKQAHSALYDTERTAKLFCYMVNHLKDLGGFPHIASELEQEKTTEKETAL.

One can recognise an Exonuclease domain in the interval 23-197; it reads VIIDVETAGF…YDTERTAKLF (175 aa). Mg(2+) is bound by residues Asp26, Glu28, His184, and Asp189. His184 (proton donor/acceptor) is an active-site residue.

It belongs to the RNase T family. As to quaternary structure, homodimer. Mg(2+) is required as a cofactor.

Its function is as follows. Trims short 3' overhangs of a variety of RNA species, leaving a one or two nucleotide 3' overhang. Responsible for the end-turnover of tRNA: specifically removes the terminal AMP residue from uncharged tRNA (tRNA-C-C-A). Also appears to be involved in tRNA biosynthesis. The protein is Ribonuclease T of Haemophilus influenzae (strain ATCC 51907 / DSM 11121 / KW20 / Rd).